The chain runs to 141 residues: HTH-type transcriptional regulator LrpA (141 aa).

The HTH asnC-type domain maps to 2-63 (VDERDKIILD…KINPKKLGYS (62 aa)). A DNA-binding region (H-T-H motif) is located at residues 21-40 (FTEIAKILGISETAVRKRVK).

As to quaternary structure, homooctamer; tetramer of dimers.

DNA-binding protein that negatively regulates its own transcription. Interferes with RNA polymerase (RNAP) recruitment by inhibiting the association of RNAP with the TBP-TFB promoter complex. In Pyrococcus abyssi (strain GE5 / Orsay), this protein is HTH-type transcriptional regulator LrpA (lrpA).